Consider the following 54-residue polypeptide: uncharacterized protein (54 aa).

This is an uncharacterized protein from Saccharomyces cerevisiae (strain ATCC 204508 / S288c) (Baker's yeast).